Consider the following 262-residue polypeptide: Indole-3-glycerol phosphate synthase (262 aa).

This sequence belongs to the TrpC family.

It catalyses the reaction 1-(2-carboxyphenylamino)-1-deoxy-D-ribulose 5-phosphate + H(+) = (1S,2R)-1-C-(indol-3-yl)glycerol 3-phosphate + CO2 + H2O. It participates in amino-acid biosynthesis; L-tryptophan biosynthesis; L-tryptophan from chorismate: step 4/5. This Aromatoleum aromaticum (strain DSM 19018 / LMG 30748 / EbN1) (Azoarcus sp. (strain EbN1)) protein is Indole-3-glycerol phosphate synthase.